The primary structure comprises 519 residues: Lysine 5,6-aminomutase alpha subunit (519 aa).

Residue 57-59 (DEV) coordinates adenosylcob(III)alamin. Residues 187-192 (RTTGQS), Ser241, Tyr266, Arg271, and Asn302 contribute to the pyridoxal 5'-phosphate site.

Belongs to the KamD family. Heterotetramer of 2 alpha and 2 beta subunits. Adenosylcob(III)alamin is required as a cofactor. It depends on pyridoxal 5'-phosphate as a cofactor.

It carries out the reaction (3S)-3,6-diaminohexanoate = (3S,5S)-3,5-diaminohexanoate. The catalysed reaction is D-lysine = (2R,5S)-2,5-diaminohexanoate. Its pathway is amino-acid metabolism; lysine degradation. Rapidly inactivated in the presence of D-lysine and to a lesser extent in the absence of adenosylcobalamin (Adocbl). Activity is stable in the presence of Adocbl when D-lysine is absent. Adocbl imparts thermal stability at 37 degrees Celsius. Its function is as follows. Catalyzes the migration of the L-beta-lysine and D-lysine epsilon amino group to the delta carbon to produce 3,5-diaminohexanoate and 2,5-diaminohexanoate, respectively. The chain is Lysine 5,6-aminomutase alpha subunit (kamD) from Acetoanaerobium sticklandii (strain ATCC 12662 / DSM 519 / JCM 1433 / CCUG 9281 / NCIMB 10654 / HF) (Clostridium sticklandii).